The chain runs to 75 residues: F1845 fimbrial adhesin operon regulatory protein DaaF (75 aa).

Its function is as follows. May have a possible regulatory function on the expression of the other daa genes. The protein is F1845 fimbrial adhesin operon regulatory protein DaaF (daaF) of Escherichia coli.